The following is a 287-amino-acid chain: Orotidine 5'-phosphate decarboxylase (287 aa).

Lys95 functions as the Proton donor in the catalytic mechanism.

Belongs to the OMP decarboxylase family. Type 2 subfamily.

It carries out the reaction orotidine 5'-phosphate + H(+) = UMP + CO2. It participates in pyrimidine metabolism; UMP biosynthesis via de novo pathway; UMP from orotate: step 2/2. The chain is Orotidine 5'-phosphate decarboxylase from Albidiferax ferrireducens (strain ATCC BAA-621 / DSM 15236 / T118) (Rhodoferax ferrireducens).